A 450-amino-acid polypeptide reads, in one-letter code: UDP-N-acetylmuramoylalanine--D-glutamate ligase (450 aa).

An ATP-binding site is contributed by 118–124; the sequence is GSNAKST.

The protein belongs to the MurCDEF family.

It is found in the cytoplasm. It catalyses the reaction UDP-N-acetyl-alpha-D-muramoyl-L-alanine + D-glutamate + ATP = UDP-N-acetyl-alpha-D-muramoyl-L-alanyl-D-glutamate + ADP + phosphate + H(+). The protein operates within cell wall biogenesis; peptidoglycan biosynthesis. Its function is as follows. Cell wall formation. Catalyzes the addition of glutamate to the nucleotide precursor UDP-N-acetylmuramoyl-L-alanine (UMA). The protein is UDP-N-acetylmuramoylalanine--D-glutamate ligase of Pseudomonas putida (strain ATCC 47054 / DSM 6125 / CFBP 8728 / NCIMB 11950 / KT2440).